Consider the following 172-residue polypeptide: Transcriptional activator protein (172 aa).

The Nuclear localization signal signature appears at 56-71; sequence KAQHRIAKHKAIRRRR. A zinc finger lies at 76 to 93; sequence CGCSIFYHIKCADHGFTH. Residues 119-172 are disordered; that stretch reads DHAGGRSSIHTDKDIPHPSQVQSQPQESTGSPQSIPELPSLDDIDSSFWDDIFK. The segment covering 137-152 has biased composition (polar residues); that stretch reads SQVQSQPQESTGSPQS. The interval 158–172 is transactivation; the sequence is SLDDIDSSFWDDIFK.

The protein belongs to the geminiviridae transcriptional activator protein family. Monomer. Homodimer. Homooligomer. Self-interaction correlates with nuclear localization and efficient activation of transcription. Monomers suppress local silencing by interacting with and inactivating host adenosine kinase 2 (ADK2) in the cytoplasm. Interacts with and inhibits host SNF1 kinase. Binds to ssDNA. Phosphorylated.

It localises to the host nucleus. The protein resides in the host cytoplasm. Functionally, strong activator of the late viral genes promoters. Enhances the expression of the capsid protein and nuclear shuttle protein. Acts as a suppressor of RNA-mediated gene silencing, also known as post-transcriptional gene silencing (PTGS), a mechanism of plant viral defense that limits the accumulation of viral RNAs. Suppresses the host RNA silencing by inhibiting adenosine kinase 2 (ADK2), a kinase involved in a general methylation pathway. Also suppresses the host basal defense by interacting with and inhibiting SNF1 kinase, a key regulator of cell metabolism implicated in innate antiviral defense. Determines pathogenicity. In Bean golden yellow mosaic virus (isolate Puerto Rico-Japan) (BGYMV), this protein is Transcriptional activator protein.